Here is a 377-residue protein sequence, read N- to C-terminus: N-acetylgalactosamine-6-phosphate deacetylase (377 aa).

Glutamate 125 is an a divalent metal cation binding site. Alanine 136 to histidine 137 lines the substrate pocket. A divalent metal cation is bound by residues histidine 191 and histidine 212. Substrate contacts are provided by residues asparagine 215–glycine 216, arginine 223, and aspartate 244–histidine 247. Residue aspartate 269 is the Proton donor/acceptor of the active site. A substrate-binding site is contributed by leucine 302 to glycine 304.

Belongs to the metallo-dependent hydrolases superfamily. NagA family. It depends on a divalent metal cation as a cofactor.

The enzyme catalyses N-acetyl-D-galactosamine 6-phosphate + H2O = D-galactosamine 6-phosphate + acetate. In terms of biological role, catalyzes the deacetylation of N-acetyl-D-galactosamine 6-phosphate to D-galactosamine 6-phosphate. Can probably also catalyze the deacetylation of N-acetyl-D-glucosamine 6-phosphate to D-glucosamine 6-phosphate. The protein is N-acetylgalactosamine-6-phosphate deacetylase (agaA) of Escherichia coli O157:H7.